The chain runs to 239 residues: Calcium-activated potassium channel subunit beta-3 (239 aa).

At 1-51 (MQPFSIPVQITLQGGRRRQGRTALPASGISNGDPLKVHPKLPSSAGEDRAT) the chain is on the cytoplasmic side. Residues 15–38 (GRRRQGRTALPASGISNGDPLKVH) are disordered. The helical transmembrane segment at 52-72 (LLGIAMMASSVLMFFLLGTTV) threads the bilayer. Topologically, residues 73–197 (LKPFMLSSPR…GVVLRKSGHK (125 aa)) are extracellular. Residues Asn86, Asn123, and Asn174 are each glycosylated (N-linked (GlcNAc...) asparagine). Residues 198–218 (VVFHCLFWPLLTLLGGALIVG) traverse the membrane as a helical segment. The Cytoplasmic segment spans residues 219–239 (LVRLTQHLSFQCEKYRAVVRA).

It belongs to the KCNMB (TC 8.A.14.1) family. KCNMB3 subfamily. Interacts with KCNMA1 tetramer. There are probably 4 molecules of KCMNB3 per KCNMA1 tetramer. N-glycosylated. Post-translationally, the extracellular domain contains disulfide bond essential for the gating mechanism.

The protein localises to the membrane. Functionally, regulatory subunit of the calcium activated potassium KCNMA1 (maxiK) channel. Modulates the calcium sensitivity and gating kinetics of KCNMA1, thereby contributing to KCNMA1 channel diversity. Alters the functional properties of the current expressed by the KCNMA1 channel. May partially inactivate the current of KCNBMA. Two or more subunits of KCNMB3 are required to block the KCNMA1 tetramer. The polypeptide is Calcium-activated potassium channel subunit beta-3 (Rattus norvegicus (Rat)).